A 307-amino-acid chain; its full sequence is 2-phospho-L-lactate transferase (307 aa).

Residues Asp-48 and Lys-87 each coordinate 7,8-didemethyl-8-hydroxy-5-deazariboflavin.

The protein belongs to the CofD family. As to quaternary structure, homodimer. Requires Mg(2+) as cofactor.

It carries out the reaction (2S)-lactyl-2-diphospho-5'-guanosine + 7,8-didemethyl-8-hydroxy-5-deazariboflavin = oxidized coenzyme F420-0 + GMP + H(+). It participates in cofactor biosynthesis; coenzyme F420 biosynthesis. Catalyzes the transfer of the 2-phospholactate moiety from (2S)-lactyl-2-diphospho-5'-guanosine to 7,8-didemethyl-8-hydroxy-5-deazariboflavin (FO) with the formation of oxidized coenzyme F420-0 and GMP. The sequence is that of 2-phospho-L-lactate transferase from Methanosarcina acetivorans (strain ATCC 35395 / DSM 2834 / JCM 12185 / C2A).